The following is a 118-amino-acid chain: Large ribosomal subunit protein bL19 (118 aa).

Belongs to the bacterial ribosomal protein bL19 family.

This protein is located at the 30S-50S ribosomal subunit interface and may play a role in the structure and function of the aminoacyl-tRNA binding site. This chain is Large ribosomal subunit protein bL19, found in Citrifermentans bemidjiense (strain ATCC BAA-1014 / DSM 16622 / JCM 12645 / Bem) (Geobacter bemidjiensis).